The chain runs to 114 residues: Flagellar transcriptional regulator FlhD (114 aa).

This sequence belongs to the FlhD family. Homodimer; disulfide-linked. Forms a heterohexamer composed of two FlhC and four FlhD subunits. Each FlhC binds a FlhD dimer, forming a heterotrimer, and a hexamer assembles by dimerization of two heterotrimers.

Its subcellular location is the cytoplasm. In terms of biological role, functions in complex with FlhC as a master transcriptional regulator that regulates transcription of several flagellar and non-flagellar operons by binding to their promoter region. Activates expression of class 2 flagellar genes, including fliA, which is a flagellum-specific sigma factor that turns on the class 3 genes. Also regulates genes whose products function in a variety of physiological pathways. This Wigglesworthia glossinidia brevipalpis protein is Flagellar transcriptional regulator FlhD.